We begin with the raw amino-acid sequence, 143 residues long: MFLGSHAPRLDDKGRLTLPAKFRDELEGGLVITKGQERCLYVFPMAEFTRISESLRTVPVTAKALRDYSRVFFSSAADDVPDRQGRITVPAPLRSYAGLMRDCVVNGANTRIEIWDAQRWQAYLESQEESFAELSEEVLPGVI.

2 SpoVT-AbrB domains span residues 5–47 and 76–119; these read SHAP…PMAE and AADD…DAQR.

It belongs to the MraZ family. In terms of assembly, forms oligomers.

It is found in the cytoplasm. Its subcellular location is the nucleoid. This Frankia casuarinae (strain DSM 45818 / CECT 9043 / HFP020203 / CcI3) protein is Transcriptional regulator MraZ.